A 247-amino-acid chain; its full sequence is Probable chemoreceptor glutamine deamidase CheD (247 aa).

The interval 204–247 (KRPAAPQPARPRIELFGGRGTTPGAGSQAAGSPYAANLSRKQEA) is disordered.

The protein belongs to the CheD family.

The enzyme catalyses L-glutaminyl-[protein] + H2O = L-glutamyl-[protein] + NH4(+). Its function is as follows. Probably deamidates glutamine residues to glutamate on methyl-accepting chemotaxis receptors (MCPs), playing an important role in chemotaxis. This chain is Probable chemoreceptor glutamine deamidase CheD, found in Burkholderia orbicola (strain MC0-3).